A 143-amino-acid chain; its full sequence is MRILGLDVGSRTVGVSVSDPMGWTAQGVEIIRINEDEKEFGIDRLGEIIKEKNATGVVLGLPKNMNNSEGPRAEASRNYAKLIEKTFGLPTDFQDERLTTVEAERMLIEEANISRKKRKKVIDKIAAEFILQNYLDSKGKLTK.

It belongs to the YqgF nuclease family.

The protein localises to the cytoplasm. Its function is as follows. Could be a nuclease involved in processing of the 5'-end of pre-16S rRNA. This Leuconostoc mesenteroides subsp. mesenteroides (strain ATCC 8293 / DSM 20343 / BCRC 11652 / CCM 1803 / JCM 6124 / NCDO 523 / NBRC 100496 / NCIMB 8023 / NCTC 12954 / NRRL B-1118 / 37Y) protein is Putative pre-16S rRNA nuclease.